The primary structure comprises 370 residues: tRNA N(3)-cytidine methyltransferase METTL2 (370 aa).

The S-adenosyl-L-methionine site is built by tryptophan 72, tyrosine 76, glycine 181, aspartate 206, aspartate 232, leucine 233, and isoleucine 253.

This sequence belongs to the methyltransferase superfamily. METL family. As to quaternary structure, monomer.

It is found in the cytoplasm. The enzyme catalyses cytidine(32) in tRNA(Thr) + S-adenosyl-L-methionine = N(3)-methylcytidine(32) in tRNA(Thr) + S-adenosyl-L-homocysteine + H(+). The catalysed reaction is cytidine(32) in tRNA(Arg)(CCU) + S-adenosyl-L-methionine = N(3)-methylcytidine(32) in tRNA(Arg)(CCU) + S-adenosyl-L-homocysteine + H(+). Its function is as follows. S-adenosyl-L-methionine-dependent methyltransferase that mediates N(3)-methylcytidine modification of residue 32 of the tRNA anticodon loop of tRNA(Thr)(UGU) and tRNA(Arg)(CCU). N(3)-methylcytidine methylation by METTL2 requires the N6-threonylcarbamoylation of tRNA (t6A37) by the EKC/KEOPS complex as prerequisite. This Gallus gallus (Chicken) protein is tRNA N(3)-cytidine methyltransferase METTL2 (METTL2).